We begin with the raw amino-acid sequence, 120 residues long: Large ribosomal subunit protein bL20 (120 aa).

Belongs to the bacterial ribosomal protein bL20 family.

Its function is as follows. Binds directly to 23S ribosomal RNA and is necessary for the in vitro assembly process of the 50S ribosomal subunit. It is not involved in the protein synthesizing functions of that subunit. The protein is Large ribosomal subunit protein bL20 of Baumannia cicadellinicola subsp. Homalodisca coagulata.